Reading from the N-terminus, the 295-residue chain is Mycothiol acetyltransferase (295 aa).

2 N-acetyltransferase domains span residues 4–138 and 149–295; these read TEWR…RPLT and VRIA…YAAN. Position 36 (Asp36) interacts with 1D-myo-inositol 2-(L-cysteinylamino)-2-deoxy-alpha-D-glucopyranoside. Acetyl-CoA-binding positions include 77 to 79 and 85 to 90; these read LVV and RRGIGA. Glu176, Lys217, and Glu225 together coordinate 1D-myo-inositol 2-(L-cysteinylamino)-2-deoxy-alpha-D-glucopyranoside. Acetyl-CoA contacts are provided by residues 229 to 231 and 236 to 242; these read VGV and QGRGLGY. Residue Tyr266 participates in 1D-myo-inositol 2-(L-cysteinylamino)-2-deoxy-alpha-D-glucopyranoside binding. 271–276 provides a ligand contact to acetyl-CoA; that stretch reads NSAAVN.

The protein belongs to the acetyltransferase family. MshD subfamily. As to quaternary structure, monomer.

The enzyme catalyses 1D-myo-inositol 2-(L-cysteinylamino)-2-deoxy-alpha-D-glucopyranoside + acetyl-CoA = mycothiol + CoA + H(+). Its function is as follows. Catalyzes the transfer of acetyl from acetyl-CoA to desacetylmycothiol (Cys-GlcN-Ins) to form mycothiol. In Mycolicibacterium smegmatis (strain ATCC 700084 / mc(2)155) (Mycobacterium smegmatis), this protein is Mycothiol acetyltransferase (mshD).